A 360-amino-acid polypeptide reads, in one-letter code: 1-deoxy-D-xylulose 5-phosphate reductoisomerase (360 aa).

S7, G8, S9, I10, and N115 together coordinate NADPH. K116 is a 1-deoxy-D-xylulose 5-phosphate binding site. E117 contacts NADPH. D135 serves as a coordination point for Mn(2+). 4 residues coordinate 1-deoxy-D-xylulose 5-phosphate: S136, E137, S159, and H182. Residue E137 coordinates Mn(2+). An NADPH-binding site is contributed by G188. Positions 195, 200, 201, and 204 each coordinate 1-deoxy-D-xylulose 5-phosphate. E204 serves as a coordination point for Mn(2+).

The protein belongs to the DXR family. Mg(2+) serves as cofactor. Mn(2+) is required as a cofactor.

The enzyme catalyses 2-C-methyl-D-erythritol 4-phosphate + NADP(+) = 1-deoxy-D-xylulose 5-phosphate + NADPH + H(+). The protein operates within isoprenoid biosynthesis; isopentenyl diphosphate biosynthesis via DXP pathway; isopentenyl diphosphate from 1-deoxy-D-xylulose 5-phosphate: step 1/6. In terms of biological role, catalyzes the NADPH-dependent rearrangement and reduction of 1-deoxy-D-xylulose-5-phosphate (DXP) to 2-C-methyl-D-erythritol 4-phosphate (MEP). The sequence is that of 1-deoxy-D-xylulose 5-phosphate reductoisomerase from Campylobacter fetus subsp. fetus (strain 82-40).